We begin with the raw amino-acid sequence, 649 residues long: Extracellular metalloproteinase 4 (649 aa).

A signal peptide spans M1–G18. The propeptide occupies H19 to S260. H443 is a Zn(2+) binding site. The active site involves E444. Zn(2+) is bound at residue H447. 2 N-linked (GlcNAc...) asparagine glycosylation sites follow: N494 and N609.

This sequence belongs to the peptidase M36 family. Zn(2+) is required as a cofactor.

It is found in the secreted. Functionally, secreted metalloproteinase probably acting as a virulence factor. The sequence is that of Extracellular metalloproteinase 4 (MEP4) from Arthroderma otae (strain ATCC MYA-4605 / CBS 113480) (Microsporum canis).